A 522-amino-acid polypeptide reads, in one-letter code: Lysine--tRNA ligase (522 aa).

The 'HIGH' region signature appears at 44 to 52 (PSGLPHIGT). The 'KMSKS' region motif lies at 290-294 (KISKS). K293 lines the ATP pocket.

Belongs to the class-I aminoacyl-tRNA synthetase family.

It is found in the cytoplasm. The enzyme catalyses tRNA(Lys) + L-lysine + ATP = L-lysyl-tRNA(Lys) + AMP + diphosphate. This is Lysine--tRNA ligase from Rickettsia bellii (strain OSU 85-389).